A 732-amino-acid chain; its full sequence is Anthranilate synthase (732 aa).

A Glutamine amidotransferase type-1 domain is found at 533–728 (RVLLVDHDDS…MDRLAAGALT (196 aa)). 583-585 (GPG) is an L-glutamine binding site. C610 serves as the catalytic Nucleophile; for GATase activity. L-glutamine contacts are provided by residues Q614 and 660-661 (SL). Catalysis depends on for GATase activity residues H699 and E701.

The catalysed reaction is chorismate + L-glutamine = anthranilate + pyruvate + L-glutamate + H(+). It functions in the pathway amino-acid biosynthesis; L-tryptophan biosynthesis; L-tryptophan from chorismate: step 1/5. The chain is Anthranilate synthase (trpE(G)) from Azospirillum brasilense.